A 793-amino-acid chain; its full sequence is Protocadherin beta-7 (793 aa).

The first 26 residues, 1 to 26 (MEARVERAVQKRQVLFLCVFLGMSWA), serve as a signal peptide directing secretion. Residues 27–688 (GAEPLRYFVA…DQANSLTVYL (662 aa)) are Extracellular-facing. Cadherin domains lie at 35 to 133 (VAEE…APVF), 138 to 242 (ISLK…APDF), 247 to 347 (YKVQ…RPEL), 352 to 451 (LTSP…APAF), and 456 to 561 (YTLF…SPFV). Residue Asn169 is glycosylated (N-linked (GlcNAc...) asparagine). Residues Asn418 and Asn436 are each glycosylated (N-linked (GlcNAc...) asparagine). N-linked (GlcNAc...) asparagine glycosylation is present at Asn567. One can recognise a Cadherin 6 domain in the interval 568 to 671 (SSAPCTEPLP…LVDGFSQPYL (104 aa)). A helical transmembrane segment spans residues 689–709 (VVALASVSSLFLLSVLLFVAV). The Cytoplasmic portion of the chain corresponds to 710–793 (RLCRRSRAAP…NRPFQNNLGF (84 aa)).

It localises to the cell membrane. Its function is as follows. Potential calcium-dependent cell-adhesion protein. May be involved in the establishment and maintenance of specific neuronal connections in the brain. The chain is Protocadherin beta-7 (PCDHB7) from Homo sapiens (Human).